Consider the following 184-residue polypeptide: ATP synthase subunit b (184 aa).

The helical transmembrane segment at Ile-19–Pro-39 threads the bilayer.

The protein belongs to the ATPase B chain family. F-type ATPases have 2 components, F(1) - the catalytic core - and F(0) - the membrane proton channel. F(1) has five subunits: alpha(3), beta(3), gamma(1), delta(1), epsilon(1). F(0) has three main subunits: a(1), b(2) and c(10-14). The alpha and beta chains form an alternating ring which encloses part of the gamma chain. F(1) is attached to F(0) by a central stalk formed by the gamma and epsilon chains, while a peripheral stalk is formed by the delta and b chains.

It is found in the cell membrane. Its function is as follows. F(1)F(0) ATP synthase produces ATP from ADP in the presence of a proton or sodium gradient. F-type ATPases consist of two structural domains, F(1) containing the extramembraneous catalytic core and F(0) containing the membrane proton channel, linked together by a central stalk and a peripheral stalk. During catalysis, ATP synthesis in the catalytic domain of F(1) is coupled via a rotary mechanism of the central stalk subunits to proton translocation. Component of the F(0) channel, it forms part of the peripheral stalk, linking F(1) to F(0). The protein is ATP synthase subunit b of Cutibacterium acnes (strain DSM 16379 / KPA171202) (Propionibacterium acnes).